We begin with the raw amino-acid sequence, 187 residues long: Ribosome-recycling factor (187 aa).

The protein belongs to the RRF family.

The protein resides in the cytoplasm. Functionally, responsible for the release of ribosomes from messenger RNA at the termination of protein biosynthesis. May increase the efficiency of translation by recycling ribosomes from one round of translation to another. This is Ribosome-recycling factor from Methylorubrum populi (strain ATCC BAA-705 / NCIMB 13946 / BJ001) (Methylobacterium populi).